Here is a 363-residue protein sequence, read N- to C-terminus: Putative RAD2-like endonuclease 095R (363 aa).

This sequence belongs to the XPG/RAD2 endonuclease family. The cofactor is Mg(2+).

It is found in the host nucleus. Functionally, probable endonuclease. The protein is Putative RAD2-like endonuclease 095R of Frog virus 3 (isolate Goorha) (FV-3).